Here is a 172-residue protein sequence, read N- to C-terminus: Epididymal secretory protein 4 (172 aa).

Positions 1 to 21 are cleaved as a signal peptide; it reads MIAVLLLVFGMTPDYIFPVSA. A disulfide bond links C82 and C167.

The protein belongs to the calycin superfamily. Lipocalin family. Secreted by the epididymal epithelial cells.

It is found in the secreted. It localises to the extracellular space. Could transport small hydrophobic molecules into the epididymal fluid during the sperm maturation. Binds to the head region of spermatozoa and plays a key role in sperm maturation. This is Epididymal secretory protein 4 from Zootoca vivipara (Common lizard).